The chain runs to 279 residues: Phosphatidylglycerol--prolipoprotein diacylglyceryl transferase (279 aa).

3 helical membrane-spanning segments follow: residues 22–42 (WYGI…QAAL), 52–72 (LIDI…IYFV), and 89–109 (IWHG…SGII). Arg137 contacts a 1,2-diacyl-sn-glycero-3-phospho-(1'-sn-glycerol). 2 helical membrane passes run 203–223 (LGET…FVEA) and 235–255 (IRVA…FVIY).

Belongs to the Lgt family.

The protein localises to the cell membrane. The enzyme catalyses L-cysteinyl-[prolipoprotein] + a 1,2-diacyl-sn-glycero-3-phospho-(1'-sn-glycerol) = an S-1,2-diacyl-sn-glyceryl-L-cysteinyl-[prolipoprotein] + sn-glycerol 1-phosphate + H(+). It functions in the pathway protein modification; lipoprotein biosynthesis (diacylglyceryl transfer). Its function is as follows. Catalyzes the transfer of the diacylglyceryl group from phosphatidylglycerol to the sulfhydryl group of the N-terminal cysteine of a prolipoprotein, the first step in the formation of mature lipoproteins. The polypeptide is Phosphatidylglycerol--prolipoprotein diacylglyceryl transferase (Staphylococcus epidermidis (strain ATCC 35984 / DSM 28319 / BCRC 17069 / CCUG 31568 / BM 3577 / RP62A)).